Reading from the N-terminus, the 571-residue chain is Proline--tRNA ligase (571 aa).

This sequence belongs to the class-II aminoacyl-tRNA synthetase family. ProS type 1 subfamily. Homodimer.

It is found in the cytoplasm. It catalyses the reaction tRNA(Pro) + L-proline + ATP = L-prolyl-tRNA(Pro) + AMP + diphosphate. Its function is as follows. Catalyzes the attachment of proline to tRNA(Pro) in a two-step reaction: proline is first activated by ATP to form Pro-AMP and then transferred to the acceptor end of tRNA(Pro). As ProRS can inadvertently accommodate and process non-cognate amino acids such as alanine and cysteine, to avoid such errors it has two additional distinct editing activities against alanine. One activity is designated as 'pretransfer' editing and involves the tRNA(Pro)-independent hydrolysis of activated Ala-AMP. The other activity is designated 'posttransfer' editing and involves deacylation of mischarged Ala-tRNA(Pro). The misacylated Cys-tRNA(Pro) is not edited by ProRS. The polypeptide is Proline--tRNA ligase (Shewanella baltica (strain OS195)).